The chain runs to 90 residues: Sec-independent protein translocase protein TatA (90 aa).

Residues 1 to 21 (MGLPGGWELVLIVGVLVLLFG) traverse the membrane as a helical segment. Residues 42 to 60 (EARGMKEDEEAAKREKQAK) are compositionally biased toward basic and acidic residues. A disordered region spans residues 42–90 (EARGMKEDEEAAKREKQAKSEPQQLTAGESSAPTVASPVEETQRNDSKK). Residues 61–75 (SEPQQLTAGESSAPT) show a composition bias toward polar residues.

The protein belongs to the TatA/E family. As to quaternary structure, the Tat system comprises two distinct complexes: a TatABC complex, containing multiple copies of TatA, TatB and TatC subunits, and a separate TatA complex, containing only TatA subunits. Substrates initially bind to the TatABC complex, which probably triggers association of the separate TatA complex to form the active translocon.

The protein localises to the cell membrane. In terms of biological role, part of the twin-arginine translocation (Tat) system that transports large folded proteins containing a characteristic twin-arginine motif in their signal peptide across membranes. TatA could form the protein-conducting channel of the Tat system. The chain is Sec-independent protein translocase protein TatA from Saccharopolyspora erythraea (strain ATCC 11635 / DSM 40517 / JCM 4748 / NBRC 13426 / NCIMB 8594 / NRRL 2338).